The following is an 890-amino-acid chain: Inter-alpha-trypsin inhibitor heavy chain H3 (890 aa).

Positions 1–20 (MAFAWWPCLILALLSSLAAS) are cleaved as a signal peptide. A propeptide spanning residues 21–34 (GFPRSPFRLLGKRS) is cleaved from the precursor. One can recognise a VIT domain in the interval 29–158 (LLGKRSLPEG…KVTFELTYEE (130 aa)). N-linked (GlcNAc...) asparagine glycosylation is present at asparagine 91. The VWFA domain maps to 284–467 (NVAFVIDISG…LQLQGFYEEV (184 aa)). N-linked (GlcNAc...) asparagine glycosylation occurs at asparagine 580. Aspartate 651 carries the aspartate 1-(chondroitin 4-sulfate)-ester modification. Residues 652 to 890 (PHFIIQIPEK…HTDYIVPNLF (239 aa)) constitute a propeptide that is removed on maturation.

Belongs to the ITIH family. As to quaternary structure, I-alpha-I plasma protease inhibitors are assembled from one or two heavy chains (HC) and one light chain, bikunin. Pre-alpha-inhibitor (P-alpha-I) is composed of ITIH3/HC3 and bikunin. Heavy chains are linked to bikunin via chondroitin 4-sulfate esterified to the alpha-carboxyl of the C-terminal aspartate after propeptide cleavage.

Its subcellular location is the secreted. Its function is as follows. May act as a carrier of hyaluronan in serum or as a binding protein between hyaluronan and other matrix protein, including those on cell surfaces in tissues to regulate the localization, synthesis and degradation of hyaluronan which are essential to cells undergoing biological processes. The chain is Inter-alpha-trypsin inhibitor heavy chain H3 (ITIH3) from Homo sapiens (Human).